Reading from the N-terminus, the 341-residue chain is MQGYSLLELAQQIGATIRGNADVIVTDIAPLDKADNNQLTFISNPKFREHLLQSQAGALIVTESDIEFCSAQSNLLVVKDPYVAYAILAQYMDSTPKAAQGIHQSAVVSDTATLGQHVSIGANAVIEDGVILGDNVVIGAGCFIGKHVQIGENTQLWANVNIYHDVKIGSDCLIQSGAVIGSDGFGYANDRGRWIKIPQTGTVIIGNHVEIGACTCIDRGALDATVIEDNVIIDNLCQIAHNVHIGTGTAVAGGVIMAGSLKVGRYCLIGGASVINGHMEICDKVTITGMGMVMRPITEPGIYSSGIPLQPNKVWRKTAALTLDIDKINKRLKAVEKKLAE.

The active-site Proton acceptor is histidine 241.

The protein belongs to the transferase hexapeptide repeat family. LpxD subfamily. As to quaternary structure, homotrimer.

The catalysed reaction is a UDP-3-O-[(3R)-3-hydroxyacyl]-alpha-D-glucosamine + a (3R)-hydroxyacyl-[ACP] = a UDP-2-N,3-O-bis[(3R)-3-hydroxyacyl]-alpha-D-glucosamine + holo-[ACP] + H(+). It participates in bacterial outer membrane biogenesis; LPS lipid A biosynthesis. Catalyzes the N-acylation of UDP-3-O-acylglucosamine using 3-hydroxyacyl-ACP as the acyl donor. Is involved in the biosynthesis of lipid A, a phosphorylated glycolipid that anchors the lipopolysaccharide to the outer membrane of the cell. This chain is UDP-3-O-acylglucosamine N-acyltransferase, found in Histophilus somni (strain 129Pt) (Haemophilus somnus).